A 476-amino-acid chain; its full sequence is ATP synthase subunit beta (476 aa).

Residue glycine 154 to threonine 161 participates in ATP binding.

Belongs to the ATPase alpha/beta chains family. In terms of assembly, F-type ATPases have 2 components, CF(1) - the catalytic core - and CF(0) - the membrane proton channel. CF(1) has five subunits: alpha(3), beta(3), gamma(1), delta(1), epsilon(1). CF(0) has four main subunits: a(1), b(1), b'(1) and c(9-12).

Its subcellular location is the cell inner membrane. It carries out the reaction ATP + H2O + 4 H(+)(in) = ADP + phosphate + 5 H(+)(out). Its function is as follows. Produces ATP from ADP in the presence of a proton gradient across the membrane. The catalytic sites are hosted primarily by the beta subunits. The chain is ATP synthase subunit beta from Rhodopseudomonas palustris (strain HaA2).